Reading from the N-terminus, the 106-residue chain is Small ribosomal subunit protein uS10 (106 aa).

The protein belongs to the universal ribosomal protein uS10 family. Part of the 30S ribosomal subunit.

Involved in the binding of tRNA to the ribosomes. The protein is Small ribosomal subunit protein uS10 of Pyrobaculum aerophilum (strain ATCC 51768 / DSM 7523 / JCM 9630 / CIP 104966 / NBRC 100827 / IM2).